Reading from the N-terminus, the 347-residue chain is Single-pass membrane and coiled-coil domain-containing protein 2 (347 aa).

Positions 1-89 are disordered; the sequence is MMSLQLGTAG…PPSKPDEQEV (89 aa). Basic and acidic residues-rich tracts occupy residues 10 to 21, 36 to 51, and 60 to 86; these read GKERQLAEKSRD, EMDHISDRPDEKDKPS, and YKMDTEKWDGLEQESEHSQDPPSKPDE. Residues 139–238 are a coiled coil; sequence DWLERINNII…MNVLNSKLEM (100 aa). The residue at position 178 (serine 178) is a Phosphoserine. Positions 243–274 are disordered; that stretch reads GSDADSHNSEDVDTEQEEPLVPEASPSLSASP. A compositionally biased stretch (acidic residues) spans 253-262; the sequence is DVDTEQEEPL. Residues 263-273 are compositionally biased toward low complexity; the sequence is VPEASPSLSAS. The chain crosses the membrane as a helical span at residues 288 to 308; it reads LFVIVYVVTITGLSCYILFVD.

Its subcellular location is the membrane. The chain is Single-pass membrane and coiled-coil domain-containing protein 2 (Smco2) from Mus musculus (Mouse).